The following is a 439-amino-acid chain: Glucose-6-phosphate 1-dehydrogenase (439 aa).

Lys-100 serves as a coordination point for NADP(+). 4 residues coordinate substrate: His-130, Lys-134, Glu-168, and Asp-187. His-192 serves as the catalytic Proton acceptor. Residue Lys-288 coordinates substrate.

The protein belongs to the glucose-6-phosphate dehydrogenase family.

The enzyme catalyses D-glucose 6-phosphate + NADP(+) = 6-phospho-D-glucono-1,5-lactone + NADPH + H(+). It participates in carbohydrate degradation; pentose phosphate pathway; D-ribulose 5-phosphate from D-glucose 6-phosphate (oxidative stage): step 1/3. Its function is as follows. Catalyzes the oxidation of glucose 6-phosphate to 6-phosphogluconolactone. The protein is Glucose-6-phosphate 1-dehydrogenase of Chlamydia trachomatis serovar D (strain ATCC VR-885 / DSM 19411 / UW-3/Cx).